Here is an 806-residue protein sequence, read N- to C-terminus: MAEPLKEEDGEDGSGEPPGRVKAEPVHTAASVVAKNLALLKARSFDVTFDVGDEYEIIETIGNGAYGVVSSARRRLTGQQVAIKKIPNAFDVVTNAKRTLRELKILKHFKHDNIIAIKDILKPTVPYGEFRSVYVVLDLMESDLHQIIHSSQPLTLEHVRYFLYQLLRGLKYMHSAQVIHRDLKPSNLLVNENCELKIGDFGMARGLCTSPAEHQYFMTEYVATRWYRAPELMLSLHEYTQAIDLWSVGCIFGEMLARRQLFPGKNYVHQLQLIMMVLGTPSPAVIQAVGAERVRAYIQSLPPRQPVPWETVYPGADRQALSLLGRMLRFEPSARISAAAALRHPFLAKYHDPDDEPDCAPPFDFAFDREALTRERIKEAIVAEIEDFHARREGIRQQIRFQPSLQPVASEPVCPDVEMPSPWAPSGDCAMESPPPALPPCSDPAPDTVDLTLQPAPPASELAPPKREGAISDNTKAALKAALLKSLRSRLRDGPSAPLEAPEPRKPVTAQERQREREEKRRRRQERAKEREKRRQERERKERGAGTLGGPSTDPLAGLVLSDNDRSLLERWTRMARPPAPAPAPAPAPAPAPSSAQPTSTPTGPVSQSTGPLQPAGSIPGPASQPVCPPPGPVPQPAGPIPAPLQTAPSTSLLASQSLVPPSGLPGSGAPEVLPYFPSGPPPPDPGLTPQPSTSESPDVNLVTQQLSKSQVEDPLPPVFSGTPKGSGAGYGVGFDLEEFLNQSFDMGVADGPQDGQADSASLSASLLADWLEGHGMNPADIESLQREIQMDSPMLLSDLPDLQEP.

A disordered region spans residues Met-1–Ala-23. Ala-2 is subject to N-acetylalanine. Positions Ala-2–Thr-77 are required for cytoplasmic targeting. The Protein kinase domain maps to Tyr-55 to Leu-347. ATP contacts are provided by residues Ile-61–Val-69 and Lys-84. Positions Gly-78 to Leu-139 are required for binding to MAP2K5. The necessary for oligomerization stretch occupies residues Met-140 to Gln-406. The active-site Proton acceptor is Asp-182. Residues Thr-219–Tyr-221 carry the TXY motif. A may not be required for kinase activity; required to stimulate MEF2C activity region spans residues Pro-407–Pro-806. Disordered stretches follow at residues Ala-424 to Asp-473 and Arg-488 to Ser-727. Positions Ser-433–Asp-443 are enriched in pro residues. Basic and acidic residues-rich tracts occupy residues Pro-502 to Glu-519, Arg-527 to Gly-544, and Asp-563 to Thr-573. The short motif at Arg-505–Glu-539 is the Nuclear localization signal element. Pro residues predominate over residues Pro-578–Ala-592. Residues Pro-593–Thr-603 are compositionally biased toward low complexity. Over residues Val-627 to Ala-643 the composition is skewed to pro residues. A compositionally biased stretch (polar residues) spans Thr-647–Val-660. Pro residues predominate over residues Pro-678 to Thr-689. Polar residues predominate over residues Ser-693–Ser-710. Ser-710 is subject to Phosphoserine. A Phosphothreonine modification is found at Thr-723.

It belongs to the protein kinase superfamily. CMGC Ser/Thr protein kinase family. MAP kinase subfamily. As to quaternary structure, interacts with MAP2K5. Forms oligomers. Interacts with MEF2A, MEF2C and MEF2D; the interaction phosphorylates the MEF2s and enhances transcriptional activity of MEF2A, MEF2C but not MEF2D. Interacts with SGK1. Interacts with PML. Interacts (via N-terminal half) with HSP90AB1-CDC37 chaperone complex in resting cells; the interaction is MAP2K5-independent and prevents MAPK7 from ubiquitination and proteasomal degradation. Interacts with STUB1/CHIP; the interaction is enhanced in the presence of IGF1 or MAP2K5 and promotes STUB1/CHIP E3 ligase activity. The cofactor is Mg(2+). Dually phosphorylated on Thr-219 and Tyr-221, which activates the enzyme. In terms of tissue distribution, detected in testis, brain, kidney, lung and heart. Detected in total embryo (at protein level).

It is found in the cytoplasm. The protein localises to the nucleus. The protein resides in the PML body. The enzyme catalyses L-seryl-[protein] + ATP = O-phospho-L-seryl-[protein] + ADP + H(+). It carries out the reaction L-threonyl-[protein] + ATP = O-phospho-L-threonyl-[protein] + ADP + H(+). Activated by tyrosine and threonine phosphorylation. Activated in response to hyperosmolarity, hydrogen peroxide, and epidermal growth factor (EGF). Its function is as follows. Plays a role in various cellular processes such as proliferation, differentiation and cell survival. The upstream activator of MAPK7 is the MAPK kinase MAP2K5. Upon activation, it translocates to the nucleus and phosphorylates various downstream targets including MEF2C. EGF activates MAPK7 through a Ras-independent and MAP2K5-dependent pathway. As part of the MAPK/ERK signaling pathway, acts as a negative regulator of apoptosis in cardiomyocytes via interaction with STUB1/CHIP and promotion of STUB1-mediated ubiquitination and degradation of ICER-type isoforms of CREM. May have a role in muscle cell differentiation. May be important for endothelial function and maintenance of blood vessel integrity. MAP2K5 and MAPK7 interact specifically with one another and not with MEK1/ERK1 or MEK2/ERK2 pathways. Phosphorylates SGK1 at Ser-78 and this is required for growth factor-induced cell cycle progression. Involved in the regulation of p53/TP53 by disrupting the PML-MDM2 interaction. This is Mitogen-activated protein kinase 7 (Mapk7) from Mus musculus (Mouse).